Reading from the N-terminus, the 494-residue chain is Prenylcysteine oxidase 1-like (494 aa).

A signal peptide spans 1–22; sequence MARAAPLLAALTALLAAAAAGG. Asn342 is a glycosylation site (N-linked (GlcNAc...) asparagine).

Belongs to the prenylcysteine oxidase family. Requires FAD as cofactor.

It is found in the secreted. In terms of biological role, likely to have oxidoreductase activity. Required in the mevalonate pathway to regulate prenylation and enhances the bactericidal activity of neutrophils. The chain is Prenylcysteine oxidase 1-like (PCYOX1L) from Homo sapiens (Human).